A 520-amino-acid polypeptide reads, in one-letter code: GMP synthase [glutamine-hydrolyzing] (520 aa).

A Glutamine amidotransferase type-1 domain is found at 9 to 202 (RVLIVDFGSQ…LFNIAGLKGD (194 aa)). Residue cysteine 86 is the Nucleophile of the active site. Catalysis depends on residues histidine 176 and glutamate 178. A GMPS ATP-PPase domain is found at 203-395 (WTMAAFRQEM…LGLAPAFVGR (193 aa)). Residue 230 to 236 (SGGVDSS) participates in ATP binding.

As to quaternary structure, homodimer.

It catalyses the reaction XMP + L-glutamine + ATP + H2O = GMP + L-glutamate + AMP + diphosphate + 2 H(+). Its pathway is purine metabolism; GMP biosynthesis; GMP from XMP (L-Gln route): step 1/1. Functionally, catalyzes the synthesis of GMP from XMP. The protein is GMP synthase [glutamine-hydrolyzing] of Caulobacter vibrioides (strain ATCC 19089 / CIP 103742 / CB 15) (Caulobacter crescentus).